The following is a 426-amino-acid chain: Glutamate-1-semialdehyde 2,1-aminomutase (426 aa).

At Lys267 the chain carries N6-(pyridoxal phosphate)lysine.

Belongs to the class-III pyridoxal-phosphate-dependent aminotransferase family. HemL subfamily. In terms of assembly, homodimer. It depends on pyridoxal 5'-phosphate as a cofactor.

It localises to the cytoplasm. The enzyme catalyses (S)-4-amino-5-oxopentanoate = 5-aminolevulinate. Its pathway is porphyrin-containing compound metabolism; protoporphyrin-IX biosynthesis; 5-aminolevulinate from L-glutamyl-tRNA(Glu): step 2/2. The polypeptide is Glutamate-1-semialdehyde 2,1-aminomutase (Bdellovibrio bacteriovorus (strain ATCC 15356 / DSM 50701 / NCIMB 9529 / HD100)).